The following is a 274-amino-acid chain: NADPH-dependent 7-cyano-7-deazaguanine reductase (274 aa).

A substrate-binding site is contributed by 80–82; it reads VES. 82-83 contacts NADPH; it reads SK. C181 (thioimide intermediate) is an active-site residue. D188 (proton donor) is an active-site residue. 220–221 contributes to the substrate binding site; that stretch reads HE. 249-250 is an NADPH binding site; that stretch reads RG.

It belongs to the GTP cyclohydrolase I family. QueF type 2 subfamily. In terms of assembly, homodimer.

It localises to the cytoplasm. It carries out the reaction 7-aminomethyl-7-carbaguanine + 2 NADP(+) = 7-cyano-7-deazaguanine + 2 NADPH + 3 H(+). It participates in tRNA modification; tRNA-queuosine biosynthesis. Its function is as follows. Catalyzes the NADPH-dependent reduction of 7-cyano-7-deazaguanine (preQ0) to 7-aminomethyl-7-deazaguanine (preQ1). This Burkholderia ambifaria (strain MC40-6) protein is NADPH-dependent 7-cyano-7-deazaguanine reductase.